A 160-amino-acid chain; its full sequence is SsrA-binding protein (160 aa).

This sequence belongs to the SmpB family.

The protein resides in the cytoplasm. Required for rescue of stalled ribosomes mediated by trans-translation. Binds to transfer-messenger RNA (tmRNA), required for stable association of tmRNA with ribosomes. tmRNA and SmpB together mimic tRNA shape, replacing the anticodon stem-loop with SmpB. tmRNA is encoded by the ssrA gene; the 2 termini fold to resemble tRNA(Ala) and it encodes a 'tag peptide', a short internal open reading frame. During trans-translation Ala-aminoacylated tmRNA acts like a tRNA, entering the A-site of stalled ribosomes, displacing the stalled mRNA. The ribosome then switches to translate the ORF on the tmRNA; the nascent peptide is terminated with the 'tag peptide' encoded by the tmRNA and targeted for degradation. The ribosome is freed to recommence translation, which seems to be the essential function of trans-translation. This chain is SsrA-binding protein, found in Salmonella agona (strain SL483).